Consider the following 348-residue polypeptide: UDP-glucose 4-epimerase (348 aa).

NAD(+) contacts are provided by residues 12-14 (GYI), 33-37 (DNFHN), 66-67 (DI), phenylalanine 88, and lysine 92. Substrate is bound at residue 132–134 (SAT). Tyrosine 157 acts as the Proton acceptor in catalysis. 2 residues coordinate NAD(+): lysine 161 and tyrosine 185. Substrate is bound by residues 185 to 187 (YFN), 206 to 208 (NNL), 224 to 226 (NVF), arginine 239, and 300 to 303 (REGD).

It belongs to the NAD(P)-dependent epimerase/dehydratase family. In terms of assembly, homodimer. NAD(+) is required as a cofactor.

It catalyses the reaction UDP-alpha-D-glucose = UDP-alpha-D-galactose. The catalysed reaction is UDP-N-acetyl-alpha-D-glucosamine = UDP-N-acetyl-alpha-D-galactosamine. It participates in carbohydrate metabolism; galactose metabolism. Functionally, catalyzes two distinct but analogous reactions: the reversible epimerization of UDP-glucose to UDP-galactose and the reversible epimerization of UDP-N-acetylglucosamine to UDP-N-acetylgalactosamine. The reaction with UDP-Gal plays a critical role in the Leloir pathway of galactose catabolism in which galactose is converted to the glycolytic intermediate glucose 6-phosphate. It contributes to the catabolism of dietary galactose and enables the endogenous biosynthesis of both UDP-Gal and UDP-GalNAc when exogenous sources are limited. Both UDP-sugar interconversions are important in the synthesis of glycoproteins and glycolipids. This Homo sapiens (Human) protein is UDP-glucose 4-epimerase.